Here is a 546-residue protein sequence, read N- to C-terminus: CTP synthase (546 aa).

The tract at residues 1 to 265 (MTKYVFVTGG…DEIVCHKLNI (265 aa)) is amidoligase domain. S13 is a CTP binding site. Residue S13 coordinates UTP. ATP contacts are provided by residues 14 to 19 (SLGKGI) and D71. Mg(2+)-binding residues include D71 and E139. CTP-binding positions include 146–148 (DIE), 186–191 (KTKPTQ), and K222. UTP-binding positions include 186 to 191 (KTKPTQ) and K222. The Glutamine amidotransferase type-1 domain maps to 290–543 (KIAFVGKYVD…VKAALANQKA (254 aa)). G351 contacts L-glutamine. C378 (nucleophile; for glutamine hydrolysis) is an active-site residue. Residues 379–382 (LGMQ), E402, and R469 each bind L-glutamine. Catalysis depends on residues H516 and E518.

It belongs to the CTP synthase family. As to quaternary structure, homotetramer.

The catalysed reaction is UTP + L-glutamine + ATP + H2O = CTP + L-glutamate + ADP + phosphate + 2 H(+). The enzyme catalyses L-glutamine + H2O = L-glutamate + NH4(+). It catalyses the reaction UTP + NH4(+) + ATP = CTP + ADP + phosphate + 2 H(+). Its pathway is pyrimidine metabolism; CTP biosynthesis via de novo pathway; CTP from UDP: step 2/2. With respect to regulation, allosterically activated by GTP, when glutamine is the substrate; GTP has no effect on the reaction when ammonia is the substrate. The allosteric effector GTP functions by stabilizing the protein conformation that binds the tetrahedral intermediate(s) formed during glutamine hydrolysis. Inhibited by the product CTP, via allosteric rather than competitive inhibition. In terms of biological role, catalyzes the ATP-dependent amination of UTP to CTP with either L-glutamine or ammonia as the source of nitrogen. Regulates intracellular CTP levels through interactions with the four ribonucleotide triphosphates. This is CTP synthase from Dechloromonas aromatica (strain RCB).